Here is a 237-residue protein sequence, read N- to C-terminus: NADPH-dependent FMN reductase ArsH (237 aa).

FMN contacts are provided by residues 39 to 46 and 102 to 107; these read SNRECSYS and SPERHG.

Belongs to the ArsH family. Homotetramer. The cofactor is FMN.

Its function is as follows. Has NADPH-dependent FMN reductase activity and high NADPH-dependent ferric reductase activity with highest activity for Fe(3+) as substrate. No activity with NADH, iron trichloride, Cu(2+) or Ag(+). May be involved in cytosolic ferric iron assimilation as an NADPH-dependent ferric reductase in vivo. The protein is NADPH-dependent FMN reductase ArsH of Acidithiobacillus ferrooxidans (strain ATCC 23270 / DSM 14882 / CIP 104768 / NCIMB 8455) (Ferrobacillus ferrooxidans (strain ATCC 23270)).